Reading from the N-terminus, the 215-residue chain is Octanoyltransferase (215 aa).

The BPL/LPL catalytic domain maps to 31-206 (PDSQDEIWLV…QLVKHLDYAE (176 aa)). Substrate is bound by residues 70–77 (RGGQVTYH), 137–139 (SLG), and 150–152 (GLA). Cysteine 168 acts as the Acyl-thioester intermediate in catalysis.

It belongs to the LipB family.

The protein resides in the cytoplasm. It catalyses the reaction octanoyl-[ACP] + L-lysyl-[protein] = N(6)-octanoyl-L-lysyl-[protein] + holo-[ACP] + H(+). It functions in the pathway protein modification; protein lipoylation via endogenous pathway; protein N(6)-(lipoyl)lysine from octanoyl-[acyl-carrier-protein]: step 1/2. Catalyzes the transfer of endogenously produced octanoic acid from octanoyl-acyl-carrier-protein onto the lipoyl domains of lipoate-dependent enzymes. Lipoyl-ACP can also act as a substrate although octanoyl-ACP is likely to be the physiological substrate. This Pseudomonas putida (strain ATCC 700007 / DSM 6899 / JCM 31910 / BCRC 17059 / LMG 24140 / F1) protein is Octanoyltransferase.